The primary structure comprises 457 residues: Chromosomal replication initiator protein DnaA (457 aa).

The segment at methionine 1 to phenylalanine 75 is domain I, interacts with DnaA modulators. Residues phenylalanine 75 to alanine 118 are domain II. The interval glutamate 87 to glycine 108 is disordered. The segment covering asparagine 91–threonine 103 has biased composition (basic and acidic residues). A domain III, AAA+ region region spans residues threonine 119–serine 335. The ATP site is built by glycine 163, glycine 165, lysine 166, and threonine 167. The tract at residues serine 336–lysine 457 is domain IV, binds dsDNA.

The protein belongs to the DnaA family. As to quaternary structure, oligomerizes as a right-handed, spiral filament on DNA at oriC.

The protein localises to the cytoplasm. In terms of biological role, plays an essential role in the initiation and regulation of chromosomal replication. ATP-DnaA binds to the origin of replication (oriC) to initiate formation of the DNA replication initiation complex once per cell cycle. Binds the DnaA box (a 9 base pair repeat at the origin) and separates the double-stranded (ds)DNA. Forms a right-handed helical filament on oriC DNA; dsDNA binds to the exterior of the filament while single-stranded (ss)DNA is stabiized in the filament's interior. The ATP-DnaA-oriC complex binds and stabilizes one strand of the AT-rich DNA unwinding element (DUE), permitting loading of DNA polymerase. After initiation quickly degrades to an ADP-DnaA complex that is not apt for DNA replication. Binds acidic phospholipids. This chain is Chromosomal replication initiator protein DnaA, found in Clostridium perfringens (strain SM101 / Type A).